The primary structure comprises 732 residues: Polyribonucleotide nucleotidyltransferase (732 aa).

Residues Asp-515 and Asp-521 each contribute to the Mg(2+) site. One can recognise a KH domain in the interval Pro-581–Ile-641. In terms of domain architecture, S1 motif spans Gly-672 to Val-731.

Belongs to the polyribonucleotide nucleotidyltransferase family. Mg(2+) is required as a cofactor.

It localises to the cytoplasm. It catalyses the reaction RNA(n+1) + phosphate = RNA(n) + a ribonucleoside 5'-diphosphate. Involved in mRNA degradation. Catalyzes the phosphorolysis of single-stranded polyribonucleotides processively in the 3'- to 5'-direction. The protein is Polyribonucleotide nucleotidyltransferase of Campylobacter concisus (strain 13826).